The primary structure comprises 296 residues: Glycine--tRNA ligase alpha subunit (296 aa).

The protein belongs to the class-II aminoacyl-tRNA synthetase family. Tetramer of two alpha and two beta subunits.

It is found in the cytoplasm. The catalysed reaction is tRNA(Gly) + glycine + ATP = glycyl-tRNA(Gly) + AMP + diphosphate. The sequence is that of Glycine--tRNA ligase alpha subunit from Desulfitobacterium hafniense (strain DSM 10664 / DCB-2).